Reading from the N-terminus, the 79-residue chain is D-alanyl carrier protein (79 aa).

A Carrier domain is found at 1 to 77 (MDVKETILNI…KIISGVVELM (77 aa)). O-(pantetheine 4'-phosphoryl)serine is present on Ser35.

This sequence belongs to the DltC family. In terms of processing, 4'-phosphopantetheine is transferred from CoA to a specific serine of apo-DCP.

Its subcellular location is the cytoplasm. Its pathway is cell wall biogenesis; lipoteichoic acid biosynthesis. Carrier protein involved in the D-alanylation of lipoteichoic acid (LTA). The loading of thioester-linked D-alanine onto DltC is catalyzed by D-alanine--D-alanyl carrier protein ligase DltA. The DltC-carried D-alanyl group is further transferred to cell membrane phosphatidylglycerol (PG) by forming an ester bond, probably catalyzed by DltD. D-alanylation of LTA plays an important role in modulating the properties of the cell wall in Gram-positive bacteria, influencing the net charge of the cell wall. The polypeptide is D-alanyl carrier protein (Streptococcus suis (strain 98HAH33)).